We begin with the raw amino-acid sequence, 250 residues long: MTEKSDSTTHFGFETVPEHEKAGRVQGVFNSVASKYDIMNDVMSVGIHRIWKDAMMDWLAPRPGQRLLDVAGGTGDISFRFLKRAGHGHSTVLDLTTPMLEEGRKRAEAEQMAECLDWVTGDAMALPFKDNTFDVYTISFGIRNVTRPQEALNEAYRVLKPGGRLMVLEFSQLPNDGLQKLYDLYSFNVIPRMGQMIAGDYDSYQYLVESIRNFPDQETFLGMVKSAGFENAKHRNLSMGIAALHSGWKI.

S-adenosyl-L-methionine-binding positions include Thr-74, Asp-94, 122 to 123, and Ser-139; that span reads DA.

It belongs to the class I-like SAM-binding methyltransferase superfamily. MenG/UbiE family.

The catalysed reaction is a 2-demethylmenaquinol + S-adenosyl-L-methionine = a menaquinol + S-adenosyl-L-homocysteine + H(+). It catalyses the reaction a 2-methoxy-6-(all-trans-polyprenyl)benzene-1,4-diol + S-adenosyl-L-methionine = a 5-methoxy-2-methyl-3-(all-trans-polyprenyl)benzene-1,4-diol + S-adenosyl-L-homocysteine + H(+). Its pathway is quinol/quinone metabolism; menaquinone biosynthesis; menaquinol from 1,4-dihydroxy-2-naphthoate: step 2/2. It participates in cofactor biosynthesis; ubiquinone biosynthesis. Its function is as follows. Methyltransferase required for the conversion of demethylmenaquinol (DMKH2) to menaquinol (MKH2) and the conversion of 2-polyprenyl-6-methoxy-1,4-benzoquinol (DDMQH2) to 2-polyprenyl-3-methyl-6-methoxy-1,4-benzoquinol (DMQH2). The sequence is that of Ubiquinone/menaquinone biosynthesis C-methyltransferase UbiE from Ruegeria sp. (strain TM1040) (Silicibacter sp.).